A 408-amino-acid polypeptide reads, in one-letter code: Arginine biosynthesis bifunctional protein ArgJ (408 aa).

Positions 158, 184, 195, 281, 403, and 408 each coordinate substrate. The active-site Nucleophile is Thr195.

The protein belongs to the ArgJ family. Heterotetramer of two alpha and two beta chains.

The protein resides in the cytoplasm. The enzyme catalyses N(2)-acetyl-L-ornithine + L-glutamate = N-acetyl-L-glutamate + L-ornithine. The catalysed reaction is L-glutamate + acetyl-CoA = N-acetyl-L-glutamate + CoA + H(+). Its pathway is amino-acid biosynthesis; L-arginine biosynthesis; L-ornithine and N-acetyl-L-glutamate from L-glutamate and N(2)-acetyl-L-ornithine (cyclic): step 1/1. The protein operates within amino-acid biosynthesis; L-arginine biosynthesis; N(2)-acetyl-L-ornithine from L-glutamate: step 1/4. In terms of biological role, catalyzes two activities which are involved in the cyclic version of arginine biosynthesis: the synthesis of N-acetylglutamate from glutamate and acetyl-CoA as the acetyl donor, and of ornithine by transacetylation between N(2)-acetylornithine and glutamate. This chain is Arginine biosynthesis bifunctional protein ArgJ, found in Bacillus thuringiensis subsp. konkukian (strain 97-27).